A 1065-amino-acid chain; its full sequence is Isoleucine--tRNA ligase (1065 aa).

Residues 49–59 (PYVSGAIHLGT) carry the 'HIGH' region motif. The 'KMSKS' region signature appears at 625–629 (KMSKS). Lys-628 provides a ligand contact to ATP.

This sequence belongs to the class-I aminoacyl-tRNA synthetase family. IleS type 2 subfamily. As to quaternary structure, monomer. Zn(2+) is required as a cofactor.

It is found in the cytoplasm. The catalysed reaction is tRNA(Ile) + L-isoleucine + ATP = L-isoleucyl-tRNA(Ile) + AMP + diphosphate. Functionally, catalyzes the attachment of isoleucine to tRNA(Ile). As IleRS can inadvertently accommodate and process structurally similar amino acids such as valine, to avoid such errors it has two additional distinct tRNA(Ile)-dependent editing activities. One activity is designated as 'pretransfer' editing and involves the hydrolysis of activated Val-AMP. The other activity is designated 'posttransfer' editing and involves deacylation of mischarged Val-tRNA(Ile). In Thermococcus kodakarensis (strain ATCC BAA-918 / JCM 12380 / KOD1) (Pyrococcus kodakaraensis (strain KOD1)), this protein is Isoleucine--tRNA ligase.